A 251-amino-acid chain; its full sequence is HTH-type transcriptional regulator UlaR (251 aa).

The HTH deoR-type domain maps to 3-58 (EAQRHQILLEMLAQLGFVTVEKVVERLGISPATARRDINKLDESGKLKKVRNGAEA). Residues 20 to 39 (VTVEKVVERLGISPATARRD) constitute a DNA-binding region (H-T-H motif).

Its subcellular location is the cytoplasm. Functionally, represses ulaG and the ulaABCDEF operon. The sequence is that of HTH-type transcriptional regulator UlaR from Shigella dysenteriae serotype 1 (strain Sd197).